The primary structure comprises 113 residues: Protein AV2 (113 aa).

Residues 94 to 113 are disordered; that stretch reads SKTGLGEQAHVQKAHDVQDV.

It belongs to the geminiviridae protein AV2/V2 family. In terms of assembly, interacts with host SGS3.

Its subcellular location is the host cytoplasm. The protein localises to the host perinuclear region. Through its interaction with host SGS3, acts as a suppressor of RNA-mediated gene silencing, also known as post-transcriptional gene silencing (PTGS), a mechanism of plant viral defense that limits the accumulation of viral RNAs. This chain is Protein AV2, found in African cassava mosaic virus (isolate West Kenyan 844) (ACMV).